The chain runs to 745 residues: Photosystem I P700 chlorophyll a apoprotein A2 (745 aa).

Transmembrane regions (helical) follow at residues 49–72 (LFATHFGHLAIIFLWASGNVFHIA), 138–161 (LYAGAIGLLLLAAVFLFAGWLHLQ), 178–202 (LNHHLAGLFGVSSLAWAGHLVHVAI), 276–294 (MAHHHLAIAVIFIVAGHMY), 338–361 (LHFQLALALACLGVVTSLVAQHMY), 377–403 (AALYTHHQYIAGFLMVGAFAHGAIFLV), 425–447 (AIISHLSWVSLFLGFHTLGLYVH), and 528–546 (FLVHHAIALGLHTTTLILV). [4Fe-4S] cluster contacts are provided by cysteine 570 and cysteine 579. Transmembrane regions (helical) follow at residues 586 to 607 (AFYLAMFWMLNTIGWVTFYWHW) and 654 to 676 (LAVWAWMFLFGHLVWATGFMFLI). Residues histidine 665, methionine 673, and tyrosine 681 each contribute to the chlorophyll a site. Phylloquinone is bound at residue tryptophan 682. The chain crosses the membrane as a helical span at residues 718 to 738 (LVGLAHFTVGYVLTYAAFVIA).

This sequence belongs to the PsaA/PsaB family. As to quaternary structure, the PsaA/B heterodimer binds the P700 chlorophyll special pair and subsequent electron acceptors. PSI consists of a core antenna complex that captures photons, and an electron transfer chain that converts photonic excitation into a charge separation. The cyanobacterial PSI reaction center is composed of one copy each of PsaA,B,C,D,E,F,I,J,K,L,M and X, and forms trimeric complexes. It depends on PSI electron transfer chain: 5 chlorophyll a, 1 chlorophyll a', 2 phylloquinones and 3 4Fe-4S clusters. PSI core antenna: 90 chlorophyll a, 22 carotenoids, 3 phospholipids and 1 galactolipid. P700 is a chlorophyll a/chlorophyll a' dimer, A0 is one or more chlorophyll a, A1 is one or both phylloquinones and FX is a shared 4Fe-4S iron-sulfur center. as a cofactor.

It is found in the cellular thylakoid membrane. The catalysed reaction is reduced [plastocyanin] + hnu + oxidized [2Fe-2S]-[ferredoxin] = oxidized [plastocyanin] + reduced [2Fe-2S]-[ferredoxin]. Its function is as follows. PsaA and PsaB bind P700, the primary electron donor of photosystem I (PSI), as well as the electron acceptors A0, A1 and FX. PSI is a plastocyanin/cytochrome c6-ferredoxin oxidoreductase, converting photonic excitation into a charge separation, which transfers an electron from the donor P700 chlorophyll pair to the spectroscopically characterized acceptors A0, A1, FX, FA and FB in turn. Oxidized P700 is reduced on the lumenal side of the thylakoid membrane by plastocyanin or cytochrome c6. This Synechococcus sp. (strain JA-3-3Ab) (Cyanobacteria bacterium Yellowstone A-Prime) protein is Photosystem I P700 chlorophyll a apoprotein A2.